The following is a 159-amino-acid chain: Putative 2'-deoxynucleoside 5'-phosphate N-hydrolase 1 (159 aa).

Residues 25-31, Tyr40, His58, Glu104, and 126-128 contribute to the substrate site; these read FLSGSIR and SAM.

Belongs to the 2'-deoxynucleoside 5'-phosphate N-hydrolase 1 family. Monomer and homodimer.

It catalyses the reaction a pyrimidine 2'-deoxyribonucleoside 5'-phosphate + H2O = a pyrimidine nucleobase + 2-deoxy-D-ribose 5-phosphate. The enzyme catalyses a purine 2'-deoxyribonucleoside 5'-phosphate + H2O = a purine nucleobase + 2-deoxy-D-ribose 5-phosphate. Its function is as follows. Catalyzes the cleavage of the N-glycosidic bond of deoxyribonucleoside 5'-monophosphates to yield deoxyribose 5-phosphate and a purine or pyrimidine base. This chain is Putative 2'-deoxynucleoside 5'-phosphate N-hydrolase 1, found in Methanosarcina barkeri (strain Fusaro / DSM 804).